The primary structure comprises 465 residues: Cysteine--tRNA ligase (465 aa).

Cys-29 is a Zn(2+) binding site. A 'HIGH' region motif is present at residues 31-41; the sequence is PTVYNYIHIGN. Residues Cys-209, His-234, and Glu-238 each contribute to the Zn(2+) site. The short motif at 266-270 is the 'KMSKS' region element; the sequence is KMSKS. Position 269 (Lys-269) interacts with ATP. Ser-270 carries the post-translational modification Phosphoserine.

This sequence belongs to the class-I aminoacyl-tRNA synthetase family. As to quaternary structure, monomer. Zn(2+) is required as a cofactor.

The protein resides in the cytoplasm. The enzyme catalyses tRNA(Cys) + L-cysteine + ATP = L-cysteinyl-tRNA(Cys) + AMP + diphosphate. This Bacillus cereus (strain ATCC 10987 / NRS 248) protein is Cysteine--tRNA ligase.